The sequence spans 256 residues: Ribosomal RNA small subunit methyltransferase J (256 aa).

S-adenosyl-L-methionine contacts are provided by residues 104-105, 120-121, 156-157, and aspartate 174; these read RD, ER, and SS.

The protein belongs to the methyltransferase superfamily. RsmJ family.

It localises to the cytoplasm. The catalysed reaction is guanosine(1516) in 16S rRNA + S-adenosyl-L-methionine = N(2)-methylguanosine(1516) in 16S rRNA + S-adenosyl-L-homocysteine + H(+). Its function is as follows. Specifically methylates the guanosine in position 1516 of 16S rRNA. The sequence is that of Ribosomal RNA small subunit methyltransferase J from Yersinia pseudotuberculosis serotype O:3 (strain YPIII).